Here is a 1307-residue protein sequence, read N- to C-terminus: Contactin-associated protein like 5-3 (1307 aa).

An N-terminal signal peptide occupies residues 1-24 (MDFVPRLNSVLTLVLSGLWHFGLT). Topologically, residues 25–1238 (ATNCDNCDDP…PLTNAVLSDS (1214 aa)) are extracellular. The F5/8 type C domain maps to 31–175 (CDDPLASFLS…IGMRMEVYGC (145 aa)). Cysteine 31 and cysteine 175 form a disulfide bridge. Laminin G-like domains lie at 181-361 (VADF…TFSC) and 368-545 (PITF…IDLC). Asparagine 283 carries N-linked (GlcNAc...) asparagine glycosylation. Cysteines 330 and 361 form a disulfide. N-linked (GlcNAc...) asparagine glycosylation occurs at asparagine 497. Disulfide bonds link cysteine 513-cysteine 545, cysteine 551-cysteine 562, cysteine 556-cysteine 571, and cysteine 573-cysteine 583. The EGF-like 1 domain occupies 547–584 (IKDRCLPNYCEHGGHCVQTWTTFYCNCSNTGYTGATCH). A Fibrinogen C-terminal domain is found at 585–792 (DSIYEQSCEV…LRCYGDRHFW (208 aa)). N-linked (GlcNAc...) asparagine glycosylation is found at asparagine 600, asparagine 624, and asparagine 637. Residues 793 to 958 (NAVSFSTEAS…MVTSGVRPGC (166 aa)) form the Laminin G-like 3 domain. 5 disulfides stabilise this stretch: cysteine 931–cysteine 958, cysteine 962–cysteine 975, cysteine 969–cysteine 984, cysteine 986–cysteine 996, and cysteine 1165–cysteine 1200. Residues 959–997 (PGHCSSYGNNCHNGGKCVEKHNSYSCDCTKSPYEGPFCQ) enclose the EGF-like 2 domain. Positions 1019 to 1200 (PVSKNTSTSS…VQGSLREFSC (182 aa)) constitute a Laminin G-like 4 domain. Residues 1239–1259 (AVIGGVIAVVTFITFCVIGIM) traverse the membrane as a helical segment. At 1260–1307 (TRFLYQHKQSHCTSQKKEKEYSENLDSSFRHDIDLQSTTSKCKREYFI) the chain is on the cytoplasmic side.

It belongs to the neurexin family.

The protein localises to the membrane. May play a role in the correct development and proper functioning of the peripheral and central nervous system and be involved in cell adhesion and intercellular communication. The chain is Contactin-associated protein like 5-3 (Cntnap5c) from Rattus norvegicus (Rat).